The sequence spans 183 residues: MRLLAVVVLALLAVSQAEEGARLLASKSLLNRYAVEGRDLTLQYNIYNVGSSAALDVELSDDSFPPEDFGIVSGMLNVKWDRIAPASNVSHTVVLRPLKAGYFNFTSATITYLAQEDGPVVIGSTSAPGQGGILAQREFDRRFSPHFLDWAAFGVMTLPSIGIPLLLWYSSKRKYDTPKPKKN.

Residues 1–17 form the signal peptide; that stretch reads MRLLAVVVLALLAVSQA. The Lumenal segment spans residues 18–146; that stretch reads EEGARLLASK…REFDRRFSPH (129 aa). Asn88 is a glycosylation site (N-linked (GlcNAc...) (high mannose) asparagine). An N-linked (GlcNAc...) asparagine glycan is attached at Asn104. The chain crosses the membrane as a helical span at residues 147–167; that stretch reads FLDWAAFGVMTLPSIGIPLLL. Residues 168–183 lie on the Cytoplasmic side of the membrane; the sequence is WYSSKRKYDTPKPKKN.

This sequence belongs to the TRAP-beta family. In terms of assembly, heterotetramer of TRAP-alpha, TRAP-beta, TRAP-delta and TRAP-gamma. Interacts with STING1.

The protein resides in the endoplasmic reticulum membrane. TRAP proteins are part of a complex whose function is to bind calcium to the ER membrane and thereby regulate the retention of ER resident proteins. This chain is Translocon-associated protein subunit beta (Ssr2), found in Mus musculus (Mouse).